Reading from the N-terminus, the 389-residue chain is UDP-GlcNAc:betaGal beta-1,3-N-acetylglucosaminyltransferase 8 (389 aa).

Topologically, residues 1 to 7 (MRCRKCQ) are cytoplasmic. Residues 8 to 24 (LCLSALLTLLGLKVYIE) form a helical; Signal-anchor for type II membrane protein membrane-spanning segment. Residues 25 to 389 (WTSESWLKKA…RHLWVPELQC (365 aa)) lie on the Lumenal side of the membrane. Positions 36–57 (PRGALPSPTPPNAEPTLPTNLS) are disordered. N-linked (GlcNAc...) asparagine glycans are attached at residues Asn-55 and Asn-212.

It belongs to the glycosyltransferase 31 family. As to quaternary structure, interacts with B3GNT2; this interaction greatly increases B3GNT2 catalytic activity, independently of B3GNT8 enzymatic activity.

It is found in the golgi apparatus membrane. It participates in protein modification; protein glycosylation. Functionally, beta-1,3-N-acetylglucosaminyltransferase that plays a role in the elongation of specific branch structures of multiantennary N-glycans. Has strong activity towards tetraantennary N-glycans and 2,6 triantennary glycans. The sequence is that of UDP-GlcNAc:betaGal beta-1,3-N-acetylglucosaminyltransferase 8 from Mus musculus (Mouse).